The chain runs to 146 residues: Acireductone dioxygenase (146 aa).

Positions 71, 73, 77, and 116 each coordinate Fe(2+). Ni(2+) is bound by residues His71, His73, Glu77, and His116.

This sequence belongs to the acireductone dioxygenase (ARD) family. Requires Fe(2+) as cofactor. Ni(2+) is required as a cofactor.

The protein resides in the cytoplasm. The protein localises to the nucleus. It catalyses the reaction 1,2-dihydroxy-5-(methylsulfanyl)pent-1-en-3-one + O2 = 4-methylsulfanyl-2-oxobutanoate + formate + 2 H(+). The enzyme catalyses 1,2-dihydroxy-5-(methylsulfanyl)pent-1-en-3-one + O2 = 3-(methylsulfanyl)propanoate + CO + formate + 2 H(+). It functions in the pathway amino-acid biosynthesis; L-methionine biosynthesis via salvage pathway; L-methionine from S-methyl-5-thio-alpha-D-ribose 1-phosphate: step 5/6. Its function is as follows. Catalyzes 2 different reactions between oxygen and the acireductone 1,2-dihydroxy-3-keto-5-methylthiopentene (DHK-MTPene) depending upon the metal bound in the active site. Fe-containing acireductone dioxygenase (Fe-ARD) produces formate and 2-keto-4-methylthiobutyrate (KMTB), the alpha-ketoacid precursor of methionine in the methionine recycle pathway. Ni-containing acireductone dioxygenase (Ni-ARD) produces methylthiopropionate, carbon monoxide and formate, and does not lie on the methionine recycle pathway. The sequence is that of Acireductone dioxygenase from Heterostelium pallidum (strain ATCC 26659 / Pp 5 / PN500) (Cellular slime mold).